Consider the following 240-residue polypeptide: Lysoplasmalogenase TMEM86A (240 aa).

Residues 1 to 21 (MVSPVTVVKSEGPKLVPFFKA) are Cytoplasmic-facing. Residues 22-42 (TCVYFVLWLPSSSPSWVSTLI) traverse the membrane as a helical segment. Residue K43 is a topological domain, extracellular. Residues 44-64 (CLPIFCLWLFLLAHGLGFLLA) form a helical membrane-spanning segment. Topologically, residues 65-70 (HPSATR) are cytoplasmic. The chain crosses the membrane as a helical span at residues 71-91 (IFVGLVFSAVGDAFLIWQDQG). A topological domain (extracellular) is located at residue Y92. The chain crosses the membrane as a helical span at residues 93 to 113 (FVHGLLMFAVTHMFYASAFGM). The Cytoplasmic portion of the chain corresponds to 114–115 (QP). Residues 116 to 136 (LALRTGLVMAALSGLCYALLY) form a helical membrane-spanning segment. Topologically, residues 137 to 138 (PC) are extracellular. The helical transmembrane segment at 139–159 (LSGAFTYLVGVYVALIGFMGW) threads the bilayer. The Cytoplasmic segment spans residues 160–174 (RAMAGLRLAGADWRW). A helical transmembrane segment spans residues 175–195 (TELAAGSGALFFIISDLTIAL). Residues 196–206 (NKFCFPVPYSR) are Extracellular-facing. A helical membrane pass occupies residues 207–227 (ALIMSTYYVAQMLVALSAVES). Residues 228–240 (REPVEHYRLTKAN) are Cytoplasmic-facing.

It belongs to the TMEM86 family. As to expression, expressed in the macrophages.

Its subcellular location is the endoplasmic reticulum membrane. The catalysed reaction is a 1-O-(1Z-alkenyl)-sn-glycero-3-phosphocholine + H2O = a 2,3-saturated aldehyde + sn-glycerol 3-phosphocholine. It carries out the reaction a 1-O-(1Z-alkenyl)-sn-glycero-3-phosphoethanolamine + H2O = a 2,3-saturated aldehyde + sn-glycero-3-phosphoethanolamine. In terms of biological role, catalyzes the hydrolysis of the vinyl ether bond of choline or ethanolamine lysoplasmalogens, forming fatty aldehyde and glycerophosphocholine or glycerophosphoethanolamine, respectively and is specific for the sn-2-deacylated (lyso) form of plasmalogen. Plays an important role in lysoplasmalogen metabolism in the adipocyte tissue and macrophages. This chain is Lysoplasmalogenase TMEM86A (TMEM86A), found in Homo sapiens (Human).